The chain runs to 194 residues: MPWVGSQFHKGDAQTIMALSNVLYQVLIALGMIYVIDTSAIISRNLNLLEGDLMFPSSVIGEIKKGKLRYMIDVLLPMIRVASPDHEYLKIVEETAAKTGDLMNLSQTDKDVLALALQYDATIVTDDYSIQNVASYLNLGFLNANIKRIDKQIAWIYRCTGCKKVFPGPVKVCDICGHEVKRHYDKRKSMIRKV.

In terms of domain architecture, PINc spans 34 to 134 (YVIDTSAIIS…TDDYSIQNVA (101 aa)). Residues Asp37 and Asp150 each contribute to the Mg(2+) site.

Belongs to the PINc/VapC protein family. Mg(2+) serves as cofactor.

Toxic component of a type II toxin-antitoxin (TA) system. An RNase. The sequence is that of Ribonuclease VapC1 from Thermoplasma acidophilum (strain ATCC 25905 / DSM 1728 / JCM 9062 / NBRC 15155 / AMRC-C165).